The primary structure comprises 683 residues: DNA-directed RNA polymerase subunit beta' (683 aa).

4 residues coordinate Zn(2+): cysteine 69, cysteine 71, cysteine 87, and cysteine 90. Mg(2+) contacts are provided by aspartate 489, aspartate 491, and aspartate 493.

It belongs to the RNA polymerase beta' chain family. RpoC1 subfamily. In plastids the minimal PEP RNA polymerase catalytic core is composed of four subunits: alpha, beta, beta', and beta''. When a (nuclear-encoded) sigma factor is associated with the core the holoenzyme is formed, which can initiate transcription. Requires Mg(2+) as cofactor. Zn(2+) serves as cofactor.

The protein resides in the plastid. It localises to the chloroplast. The enzyme catalyses RNA(n) + a ribonucleoside 5'-triphosphate = RNA(n+1) + diphosphate. In terms of biological role, DNA-dependent RNA polymerase catalyzes the transcription of DNA into RNA using the four ribonucleoside triphosphates as substrates. This Zea mays (Maize) protein is DNA-directed RNA polymerase subunit beta'.